A 611-amino-acid polypeptide reads, in one-letter code: Immunoglobulin superfamily member 8 (611 aa).

An N-terminal signal peptide occupies residues 1-25 (MGVPSPTPLSSLLLLLLILGTRCYA). 4 consecutive Ig-like C2-type domains span residues 26–143 (RQVH…AKVE), 160–284 (PRGR…WVQV), 301–422 (SQLA…EAAS), and 429–554 (PVHV…ADYS). Over 26–577 (RQVHVPRGPL…VYPYTHAVDT (552 aa)) the chain is Extracellular. A disulfide bridge connects residues Cys-47 and Cys-125. Asn-48 and Asn-137 each carry an N-linked (GlcNAc...) asparagine glycan. A disulfide bridge links Cys-184 with Cys-268. Positions 272–274 (EWI) match the EWI motif motif. 2 disulfides stabilise this stretch: Cys-324–Cys-404 and Cys-460–Cys-542. Asn-325 carries N-linked (GlcNAc...) asparagine glycosylation. A Phosphoserine modification is found at Ser-516. Residues 578 to 598 (LFVPLLVGTGVALVTGASVLA) traverse the membrane as a helical segment. The Cytoplasmic portion of the chain corresponds to 599 to 611 (TITCCFMKRMRKR). 2 S-palmitoyl cysteine lipidation sites follow: Cys-602 and Cys-603.

As to quaternary structure, interacts directly with CD82 and CD9/tetraspanin-29. Also interacts with integrin alpha-3/beta-1 and integrin alpha-4/beta-1. Part of a complex composed of CD9, PTGFRN and CD81. Interacts with CD81/tetraspanin-28. Expressed in lymphocytes as well as in many tissues with higher expression in brain. Detected in all regions of the brain with weak expression in the pituitary. Expressed selectively by neurons but not by glial cells. Expressed in myoblasts (at protein level).

The protein resides in the cell membrane. In terms of biological role, member of the immunoglobulin superfamily (IgSF) that links tetraspanin-enriched microdomains to the actin cytoskeleton and plays several important roles in innate and adaptive immunity. Acts as an inducible receptor of HSPA8 on dendritic cells to enhance the CCL21/SLC-dependent migration of activated mature dendritic cells while attenuating their antigen-specific stimulatory capacities. In complex with alpha-actinins ACTN1 and ACTN4, regulates actin dynamics in the immune synapse and subsequent T-cell activation. Inhibits the entry of several viruses such as hepatitis C Virus (HCV) or HIV-1. Mechanistically, promotes a change in CD81 organization at the plasma membrane by significantly restricting its diffusion which in turn influences CD81 interaction with Claudin-1/CLDN1, preventing CLDN1 from acting as a co-receptor required for HCV entry. Accumulates at the presynaptic terminal, the producer cell side of the virological synapse, to prevent HIV-1 Env-mediated cell-cell fusion. Highly expressed on malignant cells with antigen presentation defects, interacts with NK receptor KLRA9 to suppress NK-cell cytotoxicity. May participate in the regulation of neurite outgrowth and maintenance of the neural network in the adult brain. The protein is Immunoglobulin superfamily member 8 (Igsf8) of Mus musculus (Mouse).